The following is a 553-amino-acid chain: ATP synthase F(1) complex subunit alpha, mitochondrial (553 aa).

Residues 1-43 (MLSVRVAAAVVRALPRRAGLVSRNALGSSFIAARNFHASNTHL) constitute a mitochondrion transit peptide. S53 and S65 each carry phosphoserine. S76 is modified (phosphoserine; alternate). An O-linked (GlcNAc) serine; alternate glycan is attached at S76. Phosphoserine is present on S106. Residues K123, K126, and K132 each carry the N6-acetyllysine modification. Position 134 is a phosphothreonine (T134). N6-acetyllysine; alternate is present on K161. K161 carries the post-translational modification N6-succinyllysine; alternate. The residue at position 166 (S166) is a Phosphoserine. An N6-acetyllysine; alternate modification is found at K167. Residue K167 is modified to N6-succinyllysine; alternate. Position 184 is a phosphoserine (S184). R204 carries the omega-N-methylarginine modification. Q215, G217, K218, T219, and S220 together coordinate ATP. Residue T219 coordinates Mg(2+). N6-acetyllysine; alternate occurs at positions 230 and 239. N6-succinyllysine; alternate is present on residues K230 and K239. Residue K240 is modified to N6-acetyllysine. N6-acetyllysine; alternate occurs at positions 261 and 305. K261 and K305 each carry N6-succinyllysine; alternate. D312 is a binding site for Mg(2+). At K427 the chain carries N6-acetyllysine; alternate. K427 carries the post-translational modification N6-succinyllysine; alternate. K434 carries the N6-acetyllysine modification. Q473 and Q475 together coordinate ATP. N6-acetyllysine; alternate is present on residues K498, K506, K531, and K539. Residues K498, K506, K531, and K539 each carry the N6-succinyllysine; alternate modification. K541 carries the post-translational modification N6-acetyllysine.

Belongs to the ATPase alpha/beta chains family. Homotrimer. Component of the ATP synthase complex composed at least of ATP5F1A/subunit alpha, ATP5F1B/subunit beta, ATP5MC1/subunit c (homooctomer), MT-ATP6/subunit a, MT-ATP8/subunit 8, ATP5ME/subunit e, ATP5MF/subunit f, ATP5MG/subunit g, ATP5MK/subunit k, ATP5MJ/subunit j, ATP5F1C/subunit gamma, ATP5F1D/subunit delta, ATP5F1E/subunit epsilon, ATP5PF/subunit F6, ATP5PB/subunit b, ATP5PD/subunit d, ATP5PO/subunit OSCP. ATP synthase complex consists of a soluble F(1) head domain (subunits alpha(3) and beta(3)) - the catalytic core - and a membrane F(0) domain - the membrane proton channel (subunits c, a, 8, e, f, g, k and j). These two domains are linked by a central stalk (subunits gamma, delta, and epsilon) rotating inside the F1 region and a stationary peripheral stalk (subunits F6, b, d, and OSCP). Interacts with ATPAF2. Interacts with HRG; the interaction occurs on the surface of T-cells and alters the cell morphology when associated with concanavalin (in vitro). Interacts with PLG (angiostatin peptide); the interaction inhibits most of the angiogenic properties of angiostatin. Interacts with BLOC1S1. Interacts with BCL2L1 isoform BCL-X(L); the interaction mediates the association of BCL2L1 isoform BCL-X(L) with the mitochondrial membrane F(1)F(0) ATP synthase and enhances neurons metabolic efficiency. Interacts with CLN5 and PPT1. Interacts with S100A1; this interaction increases F1-ATPase activity. Interacts with ABCB7; this interaction allows the regulation of cellular iron homeostasis and cellular reactive oxygen species (ROS) levels in cardiomyocytes. Acetylated on lysine residues. BLOC1S1 is required for acetylation.

The protein resides in the mitochondrion inner membrane. Its subcellular location is the cell membrane. Subunit alpha, of the mitochondrial membrane ATP synthase complex (F(1)F(0) ATP synthase or Complex V) that produces ATP from ADP in the presence of a proton gradient across the membrane which is generated by electron transport complexes of the respiratory chain. ATP synthase complex consist of a soluble F(1) head domain - the catalytic core - and a membrane F(1) domain - the membrane proton channel. These two domains are linked by a central stalk rotating inside the F(1) region and a stationary peripheral stalk. During catalysis, ATP synthesis in the catalytic domain of F(1) is coupled via a rotary mechanism of the central stalk subunits to proton translocation. In vivo, can only synthesize ATP although its ATP hydrolase activity can be activated artificially in vitro. With the catalytic subunit beta (ATP5F1B), forms the catalytic core in the F(1) domain. Subunit alpha does not bear the catalytic high-affinity ATP-binding sites. This is ATP synthase F(1) complex subunit alpha, mitochondrial from Pongo abelii (Sumatran orangutan).